The sequence spans 684 residues: MADKKNLLLLFDHPTEPVFMDKGKRVTVFDVPDSFLTDRYRPISNEVQSRVGDKVEQRVPVREISIPDLRIPMSLGRDEQFSLFLPKHRRIAGRLIDIFMNMRSVDDLQSVAVYARDRVNPVLFNYALSVALLHRPDTQGLDLPSFSQTFPDRFIDSQVIRKMREESFVVQPGSRMPITIPRDYTASDLDPEHRLWYFREDLGINLHHWHWHLVYPFEASDRSIVAKDRRGELFYYMHQQVIARYNAERFSNNLARVLPFNNLRDPIAEGYFPKMDSLVASRAWPPRFESTRLSDLNRESDQLNVEIGDLERWRDRIYEAIHQGFVMDERGNRVPLDEATGIDTLGNMIESSILSPNRVLYGDLHNNGHTFISYAHDPTSKHLESFGVMGDVSTAMRDPVFYKWHSYIDRIFQEHKSRLPAYTENQLNYPGVSIAGIQVDTNGGRPNNLTTFWQQSDVDMSRGFDFLPRGNVFARFTHLQHLPFTYTISLNNDSGAQRFGYVRIFMAPKNDERGQPMLMRDQRSMMIELDKFVTSLNPGPNTIRRRSTESSVTIPFERTFRNLDANRPAAGTPEELEFNFCGCGWPNHMLVPKGLPEGLQCVLFIMVSNYENDRIDQQLVGRCSDAASYCGVRDRLYPDRQSMGFPFDRLPRSGVDRLVNFLTPNMSIVDVNIRHENRTVQRPN.

Positions 1–50 (MADKKNLLLLFDHPTEPVFMDKGKRVTVFDVPDSFLTDRYRPISNEVQSR) are excised as a propeptide. Cu cation contacts are provided by histidine 208, histidine 212, and histidine 238. The active-site Proton acceptor is glutamate 350. Positions 365, 369, and 405 each coordinate Cu cation. 2 N-linked (GlcNAc...) asparagine glycosylation sites follow: asparagine 448 and asparagine 492. 2 disulfides stabilise this stretch: cysteine 581–cysteine 623 and cysteine 583–cysteine 630. N-linked (GlcNAc...) asparagine glycosylation is found at asparagine 665 and asparagine 677.

It belongs to the tyrosinase family. Cu(2+) serves as cofactor. In terms of processing, upon activation, a trypsin type protease cleaves prophenol oxidase to yield the active enzyme.

The protein resides in the secreted. It catalyses the reaction 2 L-dopa + O2 = 2 L-dopaquinone + 2 H2O. It carries out the reaction L-tyrosine + O2 = L-dopaquinone + H2O. Its function is as follows. This is a copper-containing oxidase that functions in the formation of pigments such as melanins and other polyphenolic compounds. Catalyzes the rate-limiting conversions of tyrosine to DOPA, DOPA to DOPA-quinone and possibly 5,6 dihydroxyindole to indole-5'6 quinonee. The chain is Phenoloxidase 2 (PPO2) from Drosophila melanogaster (Fruit fly).